A 264-amino-acid polypeptide reads, in one-letter code: Aminoglycoside 3'-phosphotransferase (264 aa).

Catalysis depends on Asp190, which acts as the Proton acceptor.

It belongs to the aminoglycoside phosphotransferase family.

It carries out the reaction kanamycin A + ATP = kanamycin 3'-phosphate + ADP + H(+). Resistance to kanamycin and structurally-related aminoglycosides, including amikacin. The sequence is that of Aminoglycoside 3'-phosphotransferase (aphA) from Enterococcus faecalis (Streptococcus faecalis).